The primary structure comprises 206 residues: MRYTVALTGGIGSGKSTVSDAFADLGITVIDADIIARQMVEPGQPTLNAIAEHFGSELIAADGTLRRRALRERIFSHPEEKAWLNALLHPLIQQETQRQFQQATSPYVLWVVPLLVENRLYQKANRVLVVDVTPETQLIRTMQRDDVTREHVEHILAAQATREARLAVADDVIDNNGAPDAIASDVARLHASYLKLASQFVSQEKP.

Residues 4-200 form the DPCK domain; the sequence is TVALTGGIGS…ASYLKLASQF (197 aa). ATP is bound at residue 12–17; sequence GSGKST.

This sequence belongs to the CoaE family.

The protein localises to the cytoplasm. It carries out the reaction 3'-dephospho-CoA + ATP = ADP + CoA + H(+). It functions in the pathway cofactor biosynthesis; coenzyme A biosynthesis; CoA from (R)-pantothenate: step 5/5. Functionally, catalyzes the phosphorylation of the 3'-hydroxyl group of dephosphocoenzyme A to form coenzyme A. In Salmonella choleraesuis (strain SC-B67), this protein is Dephospho-CoA kinase.